A 483-amino-acid chain; its full sequence is Islet cell autoantigen 1 (483 aa).

An AH domain is found at 51–254 (ASDADLDAKL…TSHTMAAIHE (204 aa)). The disordered stretch occupies residues 281 to 321 (EEKKKINQQESTDAAVQEPSQLISLEEENQRKESSSFKTED). The segment covering 288–303 (QQESTDAAVQEPSQLI) has biased composition (polar residues). Positions 308 to 321 (ENQRKESSSFKTED) are enriched in basic and acidic residues.

Expressed abundantly in pancreas, heart and brain with low levels of expression in lung, kidney, liver and thyroid.

It localises to the cytoplasm. It is found in the cytosol. Its subcellular location is the golgi apparatus membrane. The protein resides in the cytoplasmic vesicle. The protein localises to the secretory vesicle membrane. It localises to the secretory vesicle. It is found in the synaptic vesicle membrane. Functionally, may play a role in neurotransmitter secretion. In Homo sapiens (Human), this protein is Islet cell autoantigen 1 (ICA1).